The sequence spans 486 residues: Aspartyl/glutamyl-tRNA(Asn/Gln) amidotransferase subunit B (486 aa).

The protein belongs to the GatB/GatE family. GatB subfamily. Heterotrimer of A, B and C subunits.

It carries out the reaction L-glutamyl-tRNA(Gln) + L-glutamine + ATP + H2O = L-glutaminyl-tRNA(Gln) + L-glutamate + ADP + phosphate + H(+). It catalyses the reaction L-aspartyl-tRNA(Asn) + L-glutamine + ATP + H2O = L-asparaginyl-tRNA(Asn) + L-glutamate + ADP + phosphate + 2 H(+). Its function is as follows. Allows the formation of correctly charged Asn-tRNA(Asn) or Gln-tRNA(Gln) through the transamidation of misacylated Asp-tRNA(Asn) or Glu-tRNA(Gln) in organisms which lack either or both of asparaginyl-tRNA or glutaminyl-tRNA synthetases. The reaction takes place in the presence of glutamine and ATP through an activated phospho-Asp-tRNA(Asn) or phospho-Glu-tRNA(Gln). This Leptospira borgpetersenii serovar Hardjo-bovis (strain JB197) protein is Aspartyl/glutamyl-tRNA(Asn/Gln) amidotransferase subunit B.